The following is an 857-amino-acid chain: Protein argonaute-1 (857 aa).

One can recognise a PAZ domain in the interval Pro-227–Ala-346. Interaction with guide RNA regions lie at residues Tyr-309–Tyr-314 and Gly-522–Lys-564. A Piwi domain is found at Leu-515–Val-816. The tract at residues Pro-670–Pro-675 is impairs access of bound RNA to the active site. 3 interaction with guide RNA regions span residues Arg-708 to Arg-712, His-751 to Arg-759, and Tyr-788 to Tyr-813.

The protein belongs to the argonaute family. Ago subfamily. As to quaternary structure, interacts with DDB1, DDX5, DDX6, DHX30, DHX36, DDX47, DICER1, AGO2, ELAVL1, HNRNPF, IGF2BP1, ILF3, IMP8, MATR3, MOV10, PABPC1, PRMT5, RBM4, SART3, TNRC6B, UPF1 and YBX1. Associates with polysomes and messenger ribonucleoproteins (mNRPs). Interacts with LIMD1, WTIP and AJUBA. Interacts with APOBEC3F, APOBEC3G and APOBEC3H. In terms of processing, ubiquitinated on surface-exposed lysines by a SCF-like E3 ubiquitin-protein ligase complex containing ZSWIM8 during target-directed microRNA degradation (TDMD), a process that mediates degradation of microRNAs (miRNAs). Ubiquitination by the SCF-like E3 ubiquitin-protein ligase complex containing ZSWIM8 leads to its subsequent degradation, thereby exposing miRNAs for degradation. ZSWIM8 recognizes and binds AGO1 when it is engaged with a TDMD target.

It localises to the cytoplasm. It is found in the P-body. In terms of biological role, required for RNA-mediated gene silencing (RNAi). Binds to short RNAs such as microRNAs (miRNAs) or short interfering RNAs (siRNAs), and represses the translation of mRNAs which are complementary to them. Lacks endonuclease activity and does not appear to cleave target mRNAs. Also required for transcriptional gene silencing (TGS) of promoter regions which are complementary to bound short antigene RNAs (agRNAs). This Homo sapiens (Human) protein is Protein argonaute-1 (AGO1).